A 306-amino-acid chain; its full sequence is UDP-N-acetylenolpyruvoylglucosamine reductase (306 aa).

The region spanning Val34–Ser198 is the FAD-binding PCMH-type domain. The active site involves Arg177. Ser227 serves as the catalytic Proton donor. The active site involves Glu297.

The protein belongs to the MurB family. The cofactor is FAD.

Its subcellular location is the cytoplasm. It catalyses the reaction UDP-N-acetyl-alpha-D-muramate + NADP(+) = UDP-N-acetyl-3-O-(1-carboxyvinyl)-alpha-D-glucosamine + NADPH + H(+). The protein operates within cell wall biogenesis; peptidoglycan biosynthesis. Cell wall formation. The protein is UDP-N-acetylenolpyruvoylglucosamine reductase of Clostridium botulinum (strain ATCC 19397 / Type A).